The primary structure comprises 633 residues: GRAM domain-containing protein 4 (633 aa).

Disordered regions lie at residues 1–46 (MGIA…VRPR), 72–109 (LAES…AGPG), and 182–216 (VLKA…RSQG). The span at 27–39 (PWDKGLSGREPPR) shows a compositional bias: basic and acidic residues. Phosphoserine is present on residues serine 75 and serine 79. Basic and acidic residues predominate over residues 95-104 (SPRDSEELRD). The stretch at 134 to 190 (HLEIALLEKHFLQEELRKLREETNSEMLRQELDRERQRRIELEQKMQEVLKARSEEQ) forms a coiled coil. The segment covering 190-205 (QPAQPQQPPKGQSQAS) has biased composition (low complexity). 3 helical membrane passes run 295 to 315 (VYMN…LAIL), 389 to 409 (TTQK…FFPY), and 411 to 431 (LVGL…DFIF). The region spanning 500–578 (GNFHEIFNLT…MDITDIQKYK (79 aa)) is the GRAM domain.

Interacts with RTN4 (isoform B).

Its subcellular location is the mitochondrion membrane. The protein localises to the endoplasmic reticulum membrane. Its function is as follows. Plays a role as a mediator of E2F1-induced apoptosis in the absence of p53/TP53. Inhibits TLR9 response to nucelic acids and regulates TLR9-mediated innate immune response. This chain is GRAM domain-containing protein 4, found in Mus musculus (Mouse).